Here is a 356-residue protein sequence, read N- to C-terminus: MKKHNYSAGPCILPQEVFEKSAQAILDFNHSGLSLLEISHRSKDFVAVMEEARALVLELLGLKGKGYQALFLAGGASLEFLMVPYNLMKENGKAAYLDTGTWASGAIKEAKHFGETVVIASSKEENYNHIPKNYSIPSDANYFHCTSNNTIFGTQMKSFPEVNIPVVCDMSSDIFSRVLDFSKFDLIYAGAQKNMGPAGTTLVIVKEEILGKTGRYIPSMLDYEKHIKAESMYNTPPVFPIYASLLTLQWLKNLGGISAIEKINNAKANLLYSEIDRNTLFKGTANAEDRSNMNATFLLNNKNHTELFDKMWAAAGISGLSGHRSVGGYRASMYNALPLESVQVLVNVMKELENKI.

Arginine 41 is an L-glutamate binding site. Pyridoxal 5'-phosphate contacts are provided by residues 76-77, tryptophan 102, threonine 150, aspartate 169, and glutamine 192; that span reads AS. Lysine 193 bears the N6-(pyridoxal phosphate)lysine mark. A pyridoxal 5'-phosphate-binding site is contributed by 234–235; sequence NT.

This sequence belongs to the class-V pyridoxal-phosphate-dependent aminotransferase family. SerC subfamily. As to quaternary structure, homodimer. Pyridoxal 5'-phosphate serves as cofactor.

It localises to the cytoplasm. The catalysed reaction is O-phospho-L-serine + 2-oxoglutarate = 3-phosphooxypyruvate + L-glutamate. The enzyme catalyses 4-(phosphooxy)-L-threonine + 2-oxoglutarate = (R)-3-hydroxy-2-oxo-4-phosphooxybutanoate + L-glutamate. It participates in amino-acid biosynthesis; L-serine biosynthesis; L-serine from 3-phospho-D-glycerate: step 2/3. The protein operates within cofactor biosynthesis; pyridoxine 5'-phosphate biosynthesis; pyridoxine 5'-phosphate from D-erythrose 4-phosphate: step 3/5. Its function is as follows. Catalyzes the reversible conversion of 3-phosphohydroxypyruvate to phosphoserine and of 3-hydroxy-2-oxo-4-phosphonooxybutanoate to phosphohydroxythreonine. This Flavobacterium psychrophilum (strain ATCC 49511 / DSM 21280 / CIP 103535 / JIP02/86) protein is Phosphoserine aminotransferase.